Reading from the N-terminus, the 231-residue chain is Orotidine 5'-phosphate decarboxylase (231 aa).

Residues D11, K33, 60–69, T120, R181, Q190, G210, and R211 contribute to the substrate site; that span reads DLKFHDIPNT. K62 functions as the Proton donor in the catalytic mechanism.

The protein belongs to the OMP decarboxylase family. Type 1 subfamily. Homodimer.

The enzyme catalyses orotidine 5'-phosphate + H(+) = UMP + CO2. It participates in pyrimidine metabolism; UMP biosynthesis via de novo pathway; UMP from orotate: step 2/2. Catalyzes the decarboxylation of orotidine 5'-monophosphate (OMP) to uridine 5'-monophosphate (UMP). The chain is Orotidine 5'-phosphate decarboxylase from Colwellia psychrerythraea (strain 34H / ATCC BAA-681) (Vibrio psychroerythus).